The sequence spans 537 residues: Lariat debranching enzyme (537 aa).

A divalent metal cation-binding residues include Cys-8, His-10, Asp-39, and Asn-84. The segment at 124–154 is lariat recognition loop; the sequence is SGIYKGHDFLRGHHEFPPYTESTCRSVYHVR. His-174, His-226, and His-228 together coordinate a divalent metal cation. 2 disordered regions span residues 242-272 and 473-537; these read KAPT…SRLP and TAAE…EDDD. Over residues 251 to 260 the composition is skewed to low complexity; the sequence is SSSSSSSSSS.

Belongs to the lariat debranching enzyme family. The cofactor is Fe(2+). Zn(2+) serves as cofactor. Mn(2+) is required as a cofactor.

It is found in the nucleus. Active in presence of diverse metals including Fe(2+), Zn(2+), Mn(2+). Binds two metal cations in two adjacent alpha and beta metal-binding pockets. Functionally, cleaves the 2'-5' phosphodiester linkage at the branch point of lariat intron pre-mRNAs after splicing and converts them into linear molecules that are subsequently degraded. It thereby facilitates ribonucleotide turnover. This Drosophila pseudoobscura pseudoobscura (Fruit fly) protein is Lariat debranching enzyme (DBR1).